The primary structure comprises 216 residues: Cytochrome c biogenesis ATP-binding export protein CcmA (216 aa).

Positions 18–216 constitute an ABC transporter domain; sequence LQVEGLAGRR…AHARTLEISA (199 aa). 50 to 57 contributes to the ATP binding site; that stretch reads GHNGSGKT.

Belongs to the ABC transporter superfamily. CcmA exporter (TC 3.A.1.107) family. As to quaternary structure, the complex is composed of two ATP-binding proteins (CcmA) and two transmembrane proteins (CcmB).

Its subcellular location is the cell inner membrane. The enzyme catalyses heme b(in) + ATP + H2O = heme b(out) + ADP + phosphate + H(+). Part of the ABC transporter complex CcmAB involved in the biogenesis of c-type cytochromes; once thought to export heme, this seems not to be the case, but its exact role is uncertain. Responsible for energy coupling to the transport system. The protein is Cytochrome c biogenesis ATP-binding export protein CcmA of Nitrosococcus oceani (strain ATCC 19707 / BCRC 17464 / JCM 30415 / NCIMB 11848 / C-107).